The following is a 342-amino-acid chain: L-threonine 3-dehydrogenase (342 aa).

Cysteine 38 is a Zn(2+) binding site. Residues threonine 40 and histidine 43 each act as charge relay system in the active site. Residues histidine 63, glutamate 64, cysteine 93, cysteine 96, cysteine 99, and cysteine 107 each contribute to the Zn(2+) site. Residues isoleucine 175, aspartate 195, arginine 200, 262 to 264, and 286 to 287 each bind NAD(+); these read LGI and IY.

The protein belongs to the zinc-containing alcohol dehydrogenase family. In terms of assembly, homotetramer. Zn(2+) is required as a cofactor.

It localises to the cytoplasm. The catalysed reaction is L-threonine + NAD(+) = (2S)-2-amino-3-oxobutanoate + NADH + H(+). It functions in the pathway amino-acid degradation; L-threonine degradation via oxydo-reductase pathway; glycine from L-threonine: step 1/2. In terms of biological role, catalyzes the NAD(+)-dependent oxidation of L-threonine to 2-amino-3-ketobutyrate. The chain is L-threonine 3-dehydrogenase from Burkholderia ambifaria (strain ATCC BAA-244 / DSM 16087 / CCUG 44356 / LMG 19182 / AMMD) (Burkholderia cepacia (strain AMMD)).